The primary structure comprises 533 residues: Acid-sensing ion channel 3 (533 aa).

The Cytoplasmic portion of the chain corresponds to 1-19 (MKPRSGLEEAQRRQASDIR). A helical membrane pass occupies residues 20 to 40 (VFASSCTMHGLGHIFGPGGLT). Threonine 40 is subject to Phosphothreonine; by PKC. The Extracellular segment spans residues 41-435 (LRRGLWATAV…EQKAAYEVSE (395 aa)). Intrachain disulfides connect cysteine 93-cysteine 187, cysteine 165-cysteine 172, cysteine 283-cysteine 372, cysteine 317-cysteine 368, cysteine 321-cysteine 366, cysteine 330-cysteine 352, and cysteine 332-cysteine 344. Asparagine 176 is a glycosylation site (N-linked (GlcNAc...) asparagine). Residues 286–310 (ASLDPDDFDPEPSDPLGSPRPRPSP) are disordered. Asparagine 400 carries an N-linked (GlcNAc...) asparagine glycan. Residues 436-456 (LLGDIGGQMGLFIGASLLTIL) traverse the membrane as a helical segment. A GAS motif; ion selectivity filter motif is present at residues 449–451 (GAS). Over 457–533 (EILDYLCEVF…HRTCYLVTRL (77 aa)) the chain is Cytoplasmic. At serine 523 the chain carries Phosphoserine; by PKC. The PDZ-binding motif lies at 530–533 (VTRL).

Belongs to the amiloride-sensitive sodium channel (TC 1.A.6) family. ASIC3 subfamily. As to quaternary structure, can form homotrimeric channels. Heterotrimer; forms functional heterotrimers producing channel with different properties. Forms heterotrimers with ASIC2; gives rise to a biphasic current with a sustained current which discriminates poorly between Na(+) and K(+). Interacts with STOM; inhibits ASIC3 acid-evoked current. Interacts with LIN7B (via PDZ domain); increases ASIC3 expression at the plasma membrane. Interacts with MAGI1 (via PDZ domain); probably regulates ASIC3. Interacts with GOPC (via PDZ domain); probably regulates ASIC3. Interacts with DLG4 (via PDZ domain); reduces ASIC3 expression at the plasma membrane. In terms of processing, could be phosphorylated by PKC, promoting activation of ASIC2/ASIC3 heterotrimers. As to expression, expressed in sciatic nerve and dorsal root ganglion (at protein level). Expressed in sensory neurons of dorsal root ganglion. Expressed in Golgi interneurons in the granular layer. Also found in superior cervical ganglia, spinal cord and brain stem.

Its subcellular location is the cell membrane. It localises to the cytoplasm. It catalyses the reaction Na(+)(in) = Na(+)(out). The enzyme catalyses K(+)(in) = K(+)(out). The catalysed reaction is Ca(2+)(in) = Ca(2+)(out). Its activity is regulated as follows. Inhibited by the diuretic drug amiloride. Inhibited by gadolinium ions. Inhibited by extracellular Ca(2+). Activated by lactate. Salicylic acid, diclofenac and aspirin inhibit the sustained current component. Activated by the vertebrate neuropeptides NPFF and NPSF, and the related FMRFamide. Specifically and reversibly inhibited by the a sea anemone toxin APETx2. ASIC3-containing channels are potentiated by the cono-RFamide CNF-Tx1.1, and probably CNF-Tx1.2 and CNF-Tx1.3 (AC P0DL71). In terms of biological role, forms pH-gated heterotrimeric sodium channels that act as postsynaptic excitatory receptors in the nervous system. Upon extracellular acidification, these channels generate a biphasic current with a fast inactivating and a slow sustained phase. ASIC3 is more sensitive to protons and gates between closed, open, and desensitized states faster than other ASICs. Displays high selectivity for sodium ions but can also permit the permeation of other cations. As a neuronal acid sensor, probably contributes to mechanoreception, acid nociception, and heat nociception. By forming heterotrimeric channels with ASIC2, generates a biphasic current with a fast inactivating and a slow sustained phase, which in sensory neurons is proposed to mediate the pain induced by acidosis that occurs in ischemic, damaged or inflamed tissues. In Rattus norvegicus (Rat), this protein is Acid-sensing ion channel 3.